The following is a 154-amino-acid chain: S-ribosylhomocysteine lyase (154 aa).

Positions 57, 61, and 124 each coordinate Fe cation.

The protein belongs to the LuxS family. As to quaternary structure, homodimer. The cofactor is Fe cation.

It carries out the reaction S-(5-deoxy-D-ribos-5-yl)-L-homocysteine = (S)-4,5-dihydroxypentane-2,3-dione + L-homocysteine. Involved in the synthesis of autoinducer 2 (AI-2) which is secreted by bacteria and is used to communicate both the cell density and the metabolic potential of the environment. The regulation of gene expression in response to changes in cell density is called quorum sensing. Catalyzes the transformation of S-ribosylhomocysteine (RHC) to homocysteine (HC) and 4,5-dihydroxy-2,3-pentadione (DPD). This is S-ribosylhomocysteine lyase from Exiguobacterium sibiricum (strain DSM 17290 / CCUG 55495 / CIP 109462 / JCM 13490 / 255-15).